The chain runs to 516 residues: Myocyte-specific enhancer factor 2A homolog (516 aa).

Residues 1–100 (MGRKKIQITR…KGLNGCESPD (100 aa)) form an interaction with hdac9 region. The MADS-box domain maps to 3-57 (RKKIQITRIMDERNRQVTFTKRKFGLMKKAYELSVLCDCEIALIIFNSSNKLFQY). The segment at residues 58 to 86 (ASTDMDKVLLKYTEYNEPHESRTNSDIVE) is a DNA-binding region (mef2-type). A disordered region spans residues 318-339 (PSSKGMMPPLNTQRVTSSQGTQ). Positions 327-339 (LNTQRVTSSQGTQ) are enriched in polar residues. Thr-343 is subject to Phosphothreonine; by NLK. Residue Ser-386 is modified to Phosphoserine; by NLK. Residues 420–433 (GSNLSINTNQNINI) show a composition bias toward polar residues. Residues 420–516 (GSNLSINTNQ…KRMRMDAWVT (97 aa)) are disordered. Residues 465–475 (DSLSSSSSSYD) show a composition bias toward low complexity. 2 stretches are compositionally biased toward basic and acidic residues: residues 476-486 (GSDREDVRNDF) and 497-516 (NNEDRDSPSVKRMRMDAWVT).

This sequence belongs to the MEF2 family. In terms of assembly, interacts with hdac9 and nlk2. Restricted to the somitic mesoderm of early embryos. Expressed in the head region of neurula stage embryos and in body muscle (myotomes) of the tadpole. Expressed in all tissues examined in the adult.

The protein localises to the nucleus. In terms of biological role, may regulate muscle-specific transcription in the embryo and may regulate transcription of a variety of cell types in the adult. Binds to the sequence 5'-CTA[TA]4TAR-3'. Acts downstream of nlk2 in anterior neural development, including eye formation. This Xenopus laevis (African clawed frog) protein is Myocyte-specific enhancer factor 2A homolog (mef2a).